A 400-amino-acid polypeptide reads, in one-letter code: Enolase (400 aa).

Gln-153 is a binding site for (2R)-2-phosphoglycerate. Glu-195 (proton donor) is an active-site residue. Mg(2+)-binding residues include Asp-231, Glu-274, and Asp-301. Positions 326, 355, 356, and 377 each coordinate (2R)-2-phosphoglycerate. The active-site Proton acceptor is the Lys-326.

The protein belongs to the enolase family. Requires Mg(2+) as cofactor.

Its subcellular location is the cytoplasm. The protein resides in the secreted. It localises to the cell surface. The catalysed reaction is (2R)-2-phosphoglycerate = phosphoenolpyruvate + H2O. It participates in carbohydrate degradation; glycolysis; pyruvate from D-glyceraldehyde 3-phosphate: step 4/5. Catalyzes the reversible conversion of 2-phosphoglycerate (2-PG) into phosphoenolpyruvate (PEP). It is essential for the degradation of carbohydrates via glycolysis. This chain is Enolase, found in Halorubrum lacusprofundi (strain ATCC 49239 / DSM 5036 / JCM 8891 / ACAM 34).